The chain runs to 155 residues: Small ribosomal subunit protein uS7c (155 aa).

This sequence belongs to the universal ribosomal protein uS7 family. As to quaternary structure, part of the 30S ribosomal subunit.

It localises to the plastid. It is found in the chloroplast. In terms of biological role, one of the primary rRNA binding proteins, it binds directly to 16S rRNA where it nucleates assembly of the head domain of the 30S subunit. This chain is Small ribosomal subunit protein uS7c (rps7), found in Cornus mas (Cornelian cherry dogwood).